Here is a 582-residue protein sequence, read N- to C-terminus: Probable DNA ligase (582 aa).

Glu248 contacts ATP. Catalysis depends on Lys250, which acts as the N6-AMP-lysine intermediate. Positions 255, 270, 299, 339, 416, and 422 each coordinate ATP.

Belongs to the ATP-dependent DNA ligase family. Requires Mg(2+) as cofactor.

The enzyme catalyses ATP + (deoxyribonucleotide)n-3'-hydroxyl + 5'-phospho-(deoxyribonucleotide)m = (deoxyribonucleotide)n+m + AMP + diphosphate.. Functionally, DNA ligase that seals nicks in double-stranded DNA during DNA replication, DNA recombination and DNA repair. The sequence is that of Probable DNA ligase from Persephonella marina (strain DSM 14350 / EX-H1).